The sequence spans 235 residues: MEKKMLYEGKAKKVYEAEDKDHVIIYYKDDATAFNGAKKSQIDHKGILNNNITSAIFEMLHEKGIETHFEKKLNEREQLCKKVEIVPLEVIVRNVAAGSMAKRLGVSEGKELNTTIFEICYKNDELGDPLINDYHAVALGLATFDELKEIYNITSNVNNILKEFFLKQNIKLIDFKLEFGRFNGKIILADEISPDTCRFWDATTNEKLDKDRFRRDMGNVEEAYIEILNRISNAK.

The protein belongs to the SAICAR synthetase family.

The catalysed reaction is 5-amino-1-(5-phospho-D-ribosyl)imidazole-4-carboxylate + L-aspartate + ATP = (2S)-2-[5-amino-1-(5-phospho-beta-D-ribosyl)imidazole-4-carboxamido]succinate + ADP + phosphate + 2 H(+). It functions in the pathway purine metabolism; IMP biosynthesis via de novo pathway; 5-amino-1-(5-phospho-D-ribosyl)imidazole-4-carboxamide from 5-amino-1-(5-phospho-D-ribosyl)imidazole-4-carboxylate: step 1/2. The chain is Phosphoribosylaminoimidazole-succinocarboxamide synthase from Clostridium novyi (strain NT).